Here is a 941-residue protein sequence, read N- to C-terminus: UvrABC system protein A (941 aa).

31-38 (GLSGSGKS) provides a ligand contact to ATP. A C4-type zinc finger spans residues 253 to 280 (CPICGYSMRELEPRLFSFNNPAGACPTC). 2 consecutive ABC transporter domains span residues 310 to 587 (WDRR…PESL) and 607 to 937 (ANPE…RFLK). 640-647 (GVSGSGKS) serves as a coordination point for ATP. The segment at 740 to 766 (CEACQGDGVIKVEMHFLPDIYVPCDQC) adopts a C4-type zinc-finger fold.

It belongs to the ABC transporter superfamily. UvrA family. As to quaternary structure, forms a heterotetramer with UvrB during the search for lesions.

The protein localises to the cytoplasm. In terms of biological role, the UvrABC repair system catalyzes the recognition and processing of DNA lesions. UvrA is an ATPase and a DNA-binding protein. A damage recognition complex composed of 2 UvrA and 2 UvrB subunits scans DNA for abnormalities. When the presence of a lesion has been verified by UvrB, the UvrA molecules dissociate. In Salmonella typhi, this protein is UvrABC system protein A.